Consider the following 215-residue polypeptide: Cytochrome b6 (215 aa).

The helical transmembrane segment at 32–52 (IFYCLGGITLTCFLIQFATGF) threads the bilayer. Cys35 lines the heme c pocket. His86 and His100 together coordinate heme b. The next 3 membrane-spanning stretches (helical) occupy residues 90 to 110 (ASMMVLMMILHVFRVYLTGGF), 116 to 136 (LTWVTGVVLAVITVSFGVTGY), and 186 to 206 (LHTFVLPWSIAVFMLMHFLMI). Heme b-binding residues include His187 and His202.

Belongs to the cytochrome b family. PetB subfamily. As to quaternary structure, the 4 large subunits of the cytochrome b6-f complex are cytochrome b6, subunit IV (17 kDa polypeptide, PetD), cytochrome f and the Rieske protein, while the 4 small subunits are PetG, PetL, PetM and PetN. The complex functions as a dimer. Requires heme b as cofactor. Heme c is required as a cofactor.

The protein resides in the cellular thylakoid membrane. Its function is as follows. Component of the cytochrome b6-f complex, which mediates electron transfer between photosystem II (PSII) and photosystem I (PSI), cyclic electron flow around PSI, and state transitions. This chain is Cytochrome b6, found in Synechococcus elongatus.